The primary structure comprises 81 residues: Omega-conotoxin-like Vc6.4 (81 aa).

The N-terminal stretch at 1-22 is a signal peptide; it reads MKLTCVMIVAVLFLTANTFVTA. Positions 23-51 are excised as a propeptide; sequence VPHSSNVLENLYLKARHEMENPEASKLNT. Cystine bridges form between Cys55-Cys72, Cys62-Cys76, and Cys71-Cys80.

Belongs to the conotoxin O1 superfamily. Expressed by the venom duct.

It localises to the secreted. Its function is as follows. Omega-conotoxins act at presynaptic membranes, they bind and block voltage-gated calcium channels. Act on high voltage-activated (HVA) calcium currents in molluscan neurons. The chain is Omega-conotoxin-like Vc6.4 from Conus victoriae (Queen Victoria cone).